Reading from the N-terminus, the 204-residue chain is MQSYASAMLSVFNSDDYSPAVQENIPALRRSSSFLCTESCNSKYQCETGENSKGNVQDRVKRPMNAFIVWSRDQRRKMALENPRMRNSEISKQLGYQWKMLTEAEKWPFFQEAQKLQAMHREKYPNYKYRPRRKAKMLPKNCSLLPADPASVLCSEVQLDNRLYRDDCTKATHSRMEHQLGHLPPINAASSPQQRDRYSHWTKL.

The tract at residues 59 to 136 (RVKRPMNAFI…YKYRPRRKAK (78 aa)) is sufficient for interaction with KPNB1. The segment at residues 60–128 (VKRPMNAFIV…MHREKYPNYK (69 aa)) is a DNA-binding region (HMG box). Required for nuclear localization regions lie at residues 61-77 (KRPM…QRRK) and 130-136 (RPRRKAK). The tract at residues 107–139 (WPFFQEAQKLQAMHREKYPNYKYRPRRKAKMLP) is sufficient for interaction with EP300. Lys-136 bears the N6-acetyllysine mark. A necessary for interaction with ZNF208 isoform KRAB-O region spans residues 138–155 (LPKNCSLLPADPASVLCS). Residues 175–204 (RMEHQLGHLPPINAASSPQQRDRYSHWTKL) form a disordered region. Residues 194–204 (QRDRYSHWTKL) show a composition bias toward basic and acidic residues. Positions 198–204 (YSHWTKL) are necessary for interaction with SLC9A3R2.

Belongs to the SRY family. Interacts with CALM, EP300, HDAC3, KPNB1, ZNF208 isoform KRAB-O, PARP1, SLC9A3R2 and WT1. The interaction with EP300 modulates its DNA-binding activity. The interaction with KPNB1 is sensitive to dissociation by Ran in the GTP-bound form. Interaction with PARP1 impaired its DNA-binding activity. Post-translationally, phosphorylated on serine residues by PKA. Phosphorylation by PKA enhances its DNA-binding activity and stimulates transcription repression. In terms of processing, acetylation of Lys-136 contributes to its nuclear localization and enhances its interaction with KPNB1. Deacetylated by HDAC3. Poly-ADP-ribosylated by PARP1. ADP-ribosylation reduces its DNA-binding activity.

The protein resides in the nucleus speckle. It is found in the cytoplasm. The protein localises to the nucleus. In terms of biological role, transcriptional regulator that controls a genetic switch in male development. It is necessary and sufficient for initiating male sex determination by directing the development of supporting cell precursors (pre-Sertoli cells) as Sertoli rather than granulosa cells. Involved in different aspects of gene regulation including promoter activation or repression. Binds to the DNA consensus sequence 5'-[AT]AACAA[AT]-3'. SRY HMG box recognizes DNA by partial intercalation in the minor groove and promotes DNA bending. Also involved in pre-mRNA splicing. In male adult brain involved in the maintenance of motor functions of dopaminergic neurons. In Homo sapiens (Human), this protein is Sex-determining region Y protein.